The following is a 342-amino-acid chain: Dihydroorotate dehydrogenase (quinone) (342 aa).

Residues 60-64 (AGLDK) and Thr84 contribute to the FMN site. Residue Lys64 coordinates substrate. 109–113 (NRMGF) provides a ligand contact to substrate. The FMN site is built by Asn137 and Asn170. Residue Asn170 participates in substrate binding. Catalysis depends on Ser173, which acts as the Nucleophile. Residue Asn175 participates in substrate binding. Lys215 and Thr243 together coordinate FMN. 244–245 (NT) contributes to the substrate binding site. FMN is bound by residues Gly266, Gly295, and 316–317 (YS).

This sequence belongs to the dihydroorotate dehydrogenase family. Type 2 subfamily. Monomer. The cofactor is FMN.

The protein resides in the cell membrane. It carries out the reaction (S)-dihydroorotate + a quinone = orotate + a quinol. The protein operates within pyrimidine metabolism; UMP biosynthesis via de novo pathway; orotate from (S)-dihydroorotate (quinone route): step 1/1. In terms of biological role, catalyzes the conversion of dihydroorotate to orotate with quinone as electron acceptor. In Nitrosomonas europaea (strain ATCC 19718 / CIP 103999 / KCTC 2705 / NBRC 14298), this protein is Dihydroorotate dehydrogenase (quinone).